We begin with the raw amino-acid sequence, 419 residues long: BTB/POZ domain-containing protein KCTD20 (419 aa).

Residues 117–191 (EKVTLLVDGT…YKTGIINCPD (75 aa)) form the BTB domain.

Interacts with AKT1; AKT2 and AKT3. Associates with PP2CA. Part of a complex containing MARK4.

The protein localises to the cytoplasm. Promotes the phosphorylation of AKT family members. This Homo sapiens (Human) protein is BTB/POZ domain-containing protein KCTD20 (KCTD20).